A 365-amino-acid polypeptide reads, in one-letter code: Histidinol-phosphate aminotransferase (365 aa).

Lys-227 is modified (N6-(pyridoxal phosphate)lysine).

The protein belongs to the class-II pyridoxal-phosphate-dependent aminotransferase family. Histidinol-phosphate aminotransferase subfamily. As to quaternary structure, homodimer. Requires pyridoxal 5'-phosphate as cofactor.

It catalyses the reaction L-histidinol phosphate + 2-oxoglutarate = 3-(imidazol-4-yl)-2-oxopropyl phosphate + L-glutamate. The protein operates within amino-acid biosynthesis; L-histidine biosynthesis; L-histidine from 5-phospho-alpha-D-ribose 1-diphosphate: step 7/9. This chain is Histidinol-phosphate aminotransferase, found in Campylobacter concisus (strain 13826).